Consider the following 402-residue polypeptide: 2,3-bisphosphoglycerate-independent phosphoglycerate mutase (402 aa).

The tract at residues 155 to 174 (SMVSDSDPHRENERPMEVRP) is disordered. The segment covering 160–174 (SDPHRENERPMEVRP) has biased composition (basic and acidic residues).

It belongs to the BPG-independent phosphoglycerate mutase family. A-PGAM subfamily.

The enzyme catalyses (2R)-2-phosphoglycerate = (2R)-3-phosphoglycerate. It participates in carbohydrate degradation; glycolysis; pyruvate from D-glyceraldehyde 3-phosphate: step 3/5. In terms of biological role, catalyzes the interconversion of 2-phosphoglycerate and 3-phosphoglycerate. This Picrophilus torridus (strain ATCC 700027 / DSM 9790 / JCM 10055 / NBRC 100828 / KAW 2/3) protein is 2,3-bisphosphoglycerate-independent phosphoglycerate mutase.